Here is a 176-residue protein sequence, read N- to C-terminus: Ribosome rescue factor SmrB (176 aa).

The Smr domain maps to 93–168; that stretch reads LDLHGYRQSE…GDAALLVLID (76 aa).

Belongs to the SmrB family. In terms of assembly, associates with collided ribosomes, but not with correctly translating polysomes.

Its function is as follows. Acts as a ribosome collision sensor. Detects stalled/collided disomes (pairs of ribosomes where the leading ribosome is stalled and a second ribosome has collided with it) and endonucleolytically cleaves mRNA at the 5' boundary of the stalled ribosome. Stalled/collided disomes form a new interface (primarily via the 30S subunits) that binds SmrB. Cleaved mRNA becomes available for tmRNA ligation, leading to ribosomal subunit dissociation and rescue of stalled ribosomes. The polypeptide is Ribosome rescue factor SmrB (Shewanella baltica (strain OS155 / ATCC BAA-1091)).